Reading from the N-terminus, the 741-residue chain is Type VI secretion system spike protein VgrG1b (741 aa).

Composition is skewed to polar residues over residues 614-629 and 649-663; these read SIGA…NETI and GNQS…SRSV. The disordered stretch occupies residues 614–678; sequence SIGANRSESV…TSVGKDDSLD (65 aa).

It belongs to the VgrG protein family.

The protein localises to the secreted. Functionally, part of the H1 type VI secretion system (H1-T6SS) specialized secretion system, which delivers several virulence factors in both prokaryotic and eukaryotic cells during infection. Allows the delivery of the Tse7 toxin to target cells where it exerts toxicity through its nuclease domain. The sequence is that of Type VI secretion system spike protein VgrG1b from Pseudomonas aeruginosa (strain ATCC 15692 / DSM 22644 / CIP 104116 / JCM 14847 / LMG 12228 / 1C / PRS 101 / PAO1).